We begin with the raw amino-acid sequence, 164 residues long: CB1 cannabinoid receptor-interacting protein 1 (164 aa).

This sequence belongs to the CNRIP family. In terms of assembly, interacts with the cannabinoid receptor CNR1 (via C-terminus). Does not interact with cannabinoid receptor CNR2. As to expression, highly expressed in brain. Also detected in heart, lung, intestine, kidney, testis, spleen, liver and muscle (at protein level).

Functionally, suppresses cannabinoid receptor CNR1-mediated tonic inhibition of voltage-gated calcium channels. This chain is CB1 cannabinoid receptor-interacting protein 1 (Cnrip1), found in Mus musculus (Mouse).